A 236-amino-acid chain; its full sequence is Carbonyl reductase family member 4 (236 aa).

Residues 11–14 (SRGI), 34–35 (RN), aspartate 55, and 82–84 (SAG) each bind NADP(+). Serine 134 is a binding site for substrate. NADP(+) contacts are provided by residues tyrosine 147, lysine 151, and 180–182 (IRT). The active-site Proton acceptor is tyrosine 147.

It belongs to the short-chain dehydrogenases/reductases (SDR) family. Homotetramer (in vitro). Heterotetramer with HSD17B8; contains two molecules each of HSD17B8 and CBR4.

The protein localises to the mitochondrion matrix. It functions in the pathway lipid metabolism; fatty acid biosynthesis. In terms of biological role, the heterotetramer with HSD17B8 has NADH-dependent 3-ketoacyl-acyl carrier protein reductase activity, and thereby plays a role in mitochondrial fatty acid biosynthesis. Within the heterotetramer, HSD17B8 binds NADH; CBR4 binds NADPD. The homotetramer has NADPH-dependent quinone reductase activity. Both homotetramer and the heterotetramer have broad in vitro substrate specificity and can reduce 9,10-phenanthrenequinone, 1,4-benzoquinone and various other o-quinones and p-quinones. In Xenopus laevis (African clawed frog), this protein is Carbonyl reductase family member 4 (cbr4).